We begin with the raw amino-acid sequence, 927 residues long: Dual serine/threonine and tyrosine protein kinase (927 aa).

Residues 1-21 are disordered; the sequence is MEADGQSWAGESVSGPGPGGG. Positions 393–429 form a coiled coil; sequence RKKENELYESLMNIANRKQEEMKDMIVETLNTMKEEL. A Protein kinase domain is found at 650–904; it reads PKLGQELGRG…PLLGIVQPML (255 aa). ATP-binding positions include 656–664 and Lys679; that span reads LGRGQYGVV. The active-site Proton acceptor is Asp775.

This sequence belongs to the protein kinase superfamily. Ser/Thr protein kinase family. Expressed in brain, heart, skeletal muscle, kidney and lung. Expressed in maturing tubular epithelia, with the most prominent expression in the medulla and the papilla. Expressed in thin ascending limb of the loop of Henle and the distal convoluted tubule. Expressed in all layers of transitional ureteric epithelium and in the ureteric smooth-muscle cells (at protein level). Widely expressed. Highly expressed in many brain regions, including in cerebellum, olfactory, hippocampus and cerebral cortex.

The protein localises to the cytoplasm. Its subcellular location is the cell membrane. The protein resides in the apical cell membrane. It localises to the basolateral cell membrane. It is found in the cell junction. It catalyses the reaction L-seryl-[protein] + ATP = O-phospho-L-seryl-[protein] + ADP + H(+). The catalysed reaction is L-threonyl-[protein] + ATP = O-phospho-L-threonyl-[protein] + ADP + H(+). The enzyme catalyses L-tyrosyl-[protein] + ATP = O-phospho-L-tyrosyl-[protein] + ADP + H(+). Functionally, acts as a positive regulator of ERK phosphorylation downstream of fibroblast growth factor-receptor activation. Involved in the regulation of both caspase-dependent apoptosis and caspase-independent cell death. In the skin, it plays a predominant role in suppressing caspase-dependent apoptosis in response to UV stress in a range of dermal cell types. The chain is Dual serine/threonine and tyrosine protein kinase (Dstyk) from Mus musculus (Mouse).